The following is a 155-amino-acid chain: Endoribonuclease YbeY (155 aa).

Positions 115, 119, and 125 each coordinate Zn(2+).

Belongs to the endoribonuclease YbeY family. Requires Zn(2+) as cofactor.

It is found in the cytoplasm. Its function is as follows. Single strand-specific metallo-endoribonuclease involved in late-stage 70S ribosome quality control and in maturation of the 3' terminus of the 16S rRNA. The chain is Endoribonuclease YbeY from Polynucleobacter asymbioticus (strain DSM 18221 / CIP 109841 / QLW-P1DMWA-1) (Polynucleobacter necessarius subsp. asymbioticus).